We begin with the raw amino-acid sequence, 346 residues long: Ketol-acid reductoisomerase (NADP(+)) (346 aa).

Positions 1 to 141 (KKNSILKKNQ…GAHHAGVLES (141 aa)) constitute a KARI N-terminal Rossmann domain. NADP(+)-binding positions include S11 and 41-43 (DKQ). The active site involves H65. G91 lines the NADP(+) pocket. 2 KARI C-terminal knotted domains span residues 142–286 (SFVA…PEQE) and 287–346 (YYDH…NKVI). Residues D150, E154, E322, and E326 each contribute to the Mg(2+) site.

It belongs to the ketol-acid reductoisomerase family. It depends on Mg(2+) as a cofactor.

It carries out the reaction (2R)-2,3-dihydroxy-3-methylbutanoate + NADP(+) = (2S)-2-acetolactate + NADPH + H(+). The enzyme catalyses (2R,3R)-2,3-dihydroxy-3-methylpentanoate + NADP(+) = (S)-2-ethyl-2-hydroxy-3-oxobutanoate + NADPH + H(+). It functions in the pathway amino-acid biosynthesis; L-isoleucine biosynthesis; L-isoleucine from 2-oxobutanoate: step 2/4. It participates in amino-acid biosynthesis; L-valine biosynthesis; L-valine from pyruvate: step 2/4. Functionally, involved in the biosynthesis of branched-chain amino acids (BCAA). Catalyzes an alkyl-migration followed by a ketol-acid reduction of (S)-2-acetolactate (S2AL) to yield (R)-2,3-dihydroxy-isovalerate. In the isomerase reaction, S2AL is rearranged via a Mg-dependent methyl migration to produce 3-hydroxy-3-methyl-2-ketobutyrate (HMKB). In the reductase reaction, this 2-ketoacid undergoes a metal-dependent reduction by NADPH to yield (R)-2,3-dihydroxy-isovalerate. The polypeptide is Ketol-acid reductoisomerase (NADP(+)) (ilvC) (Buchnera aphidicola subsp. Uroleucon rurale).